The following is a 273-amino-acid chain: MAFLTGPRLLDWASSPPHLQFNKFVLTGYRPASSGSGCLRSLFYLHNELGNIYTHGLALLGFLVLVPMTMPWSQLGKDGWLGGTHCVACLVPPAASVLYHLFMCHQGGSPVYTRLLALDMCGVCLVNTLGALPIIHCTLACRPWLRPAALMGYTALSGVAGWRALTAPSTSARLRAFGWQAGARLLVFGARGVGLGSGAPGSLPCYLRMDALALLGGLVNVARLPERWGPGRFDYWGNSHQIMHLLSVGSILQLHAGVVPDLLWAAHHACPPD.

The next 5 membrane-spanning stretches (helical) occupy residues I52–W72, G79–Y99, L115–I135, L185–C205, and L245–A265.

Belongs to the ADIPOR family. As to quaternary structure, interacts with CERS2 and CERS5; the interaction regulates CERS2 and CERS5 stabilities and activities and is inhibited in presence of ceramides. In terms of tissue distribution, expressed in adipose tissue.

The protein resides in the golgi apparatus membrane. Plays a role in maintaining adipose tissue function through the regulation of ceramide levels. Mediates the stability of ceramide synthetases, CERS2 and CERS5, and their activities. This Mus musculus (Mouse) protein is Progestin and adipoQ receptor family member 4.